Here is a 63-residue protein sequence, read N- to C-terminus: Large ribosomal subunit protein bL32 (63 aa).

Over residues 1 to 18 the composition is skewed to basic residues; sequence MPVPKRKTSPSRRGKRRS. Positions 1-26 are disordered; that stretch reads MPVPKRKTSPSRRGKRRSHDGLRPEN.

This sequence belongs to the bacterial ribosomal protein bL32 family.

This is Large ribosomal subunit protein bL32 from Neorickettsia sennetsu (strain ATCC VR-367 / Miyayama) (Ehrlichia sennetsu).